Reading from the N-terminus, the 423-residue chain is Replication factor C large subunit (423 aa).

63–70 serves as a coordination point for ATP; that stretch reads GPPGIGKT.

This sequence belongs to the activator 1 small subunits family. RfcL subfamily. As to quaternary structure, heteromultimer composed of small subunits (RfcS) and large subunits (RfcL).

In terms of biological role, part of the RFC clamp loader complex which loads the PCNA sliding clamp onto DNA. The chain is Replication factor C large subunit from Pyrobaculum islandicum (strain DSM 4184 / JCM 9189 / GEO3).